The chain runs to 481 residues: Molybdate-anion transporter (481 aa).

12 helical membrane passes run 1–21 (MFVT…ALEI), 47–67 (LFLK…PYLY), 80–100 (IAIL…VAGW), 131–151 (FMLI…TTTF), 180–200 (WNYG…EWLG), 201–221 (LGPV…AWFV), 276–296 (VMLL…FVFL), 306–326 (PPLG…STLF), 341–361 (LLCL…FSTV), 371–391 (LLAF…VSFL), 403–423 (AVLA…LLAL), and 443–463 (FAGC…LFTV).

It belongs to the major facilitator superfamily.

It localises to the cell membrane. Mediates high-affinity intracellular uptake of the rare oligo-element molybdenum. The polypeptide is Molybdate-anion transporter (mfsd5) (Danio rerio (Zebrafish)).